The chain runs to 480 residues: UDP-N-acetylmuramate--L-alanine ligase (480 aa).

122–128 (GTHGKTT) provides a ligand contact to ATP.

This sequence belongs to the MurCDEF family.

It localises to the cytoplasm. The enzyme catalyses UDP-N-acetyl-alpha-D-muramate + L-alanine + ATP = UDP-N-acetyl-alpha-D-muramoyl-L-alanine + ADP + phosphate + H(+). It participates in cell wall biogenesis; peptidoglycan biosynthesis. Its function is as follows. Cell wall formation. The sequence is that of UDP-N-acetylmuramate--L-alanine ligase from Pseudomonas aeruginosa (strain LESB58).